We begin with the raw amino-acid sequence, 241 residues long: RAD9, HUS1, RAD1-interacting nuclear orphan protein 1 (241 aa).

The segment covering 1–10 (MPPRKKRRQA) has biased composition (basic residues). The interval 1–27 (MPPRKKRRQAAQKPQLLFHQQPLEAPK) is disordered. The RAD1-binding motif signature appears at 56–62 (SWVSPQF). 2 disordered regions span residues 68–134 (SWFP…PLVP) and 157–204 (IPPD…LVTD). Residues 72-87 (GKRKHHHRDHARRSSR) are compositionally biased toward basic residues. Over residues 100–110 (ETPQSSASSAT) the composition is skewed to polar residues. The D-box motif lies at 129-136 (GRPLVPML). Positions 177 to 181 (LRENS) match the KEN box motif. A compositionally biased stretch (polar residues) spans 181–193 (SLPSCSLHTSTPK).

In terms of assembly, interacts (when phosphorylated by PLK1) with POLQ; promoting POLQ recruitment to DNA damage sites. Interacts with RAD1; interaction is direct and promotes association with the 9-1-1 (RAD9-RAD1-HUS1) complex. Interacts with RAD18. Interacts with TOPBP1. Interacts with UBE2N. In terms of processing, phosphorylated by PLK1, promoting interaction with polymerase theta (POLQ). Ubiquitinated and degraded by the APC/C complex upon mitotic exit.

The protein resides in the nucleus. The protein localises to the chromosome. Involved in microhomology-mediated end-joining (MMEJ) DNA repair by promoting recruitment of polymerase theta (POLQ) to DNA damage sites during mitosis. MMEJ is an alternative non-homologous end-joining (NHEJ) machinery that takes place during mitosis to repair double-strand breaks in DNA that originate in S-phase. Accumulates in M-phase; following phosphorylation by PLK1, interacts with POLQ, enabling its recruitment to double-strand breaks for subsequent repair. Also involved in the DNA damage response (DDR) signaling in response to genotoxic stresses such as ionizing radiation (IR) during the S phase. Recruited to sites of DNA damage through interaction with the 9-1-1 cell-cycle checkpoint response complex and TOPBP1 in a ATR-dependent manner. Required for the progression of the G1 to S phase transition. Plays a role in the stimulation of CHEK1 phosphorylation. This Bos taurus (Bovine) protein is RAD9, HUS1, RAD1-interacting nuclear orphan protein 1 (RHNO1).